We begin with the raw amino-acid sequence, 236 residues long: UPF0257 lipoprotein YnfC (236 aa).

A signal peptide spans 1–16 (MKYKLLPCLLAILLTG). Cysteine 17 is lipidated: N-palmitoyl cysteine. Residue cysteine 17 is the site of S-diacylglycerol cysteine attachment.

The protein belongs to the UPF0257 family.

The protein resides in the cell membrane. The polypeptide is UPF0257 lipoprotein YnfC (Escherichia coli O127:H6 (strain E2348/69 / EPEC)).